Here is a 326-residue protein sequence, read N- to C-terminus: MNHIKVISLVQYSSSVKKLKEEFLRNFKRFDSVEDFSDHHYVSKGKASKQHSKNWVKKVQDEWKILNQNLPETIFVRACESRMDLLRAVIIGAEGTPYHDGLFFFDIQFPDTYPSVPPNVYYHSGGLRINPNLYNCGKVCLSLLGTWHGNARQSWLPKESTMLQVLVSIQALVLNEQPYFNEPGYGLIKGTWLGESKSKVYSENVFLLSLKTMVYSMRKPPQHFEEYVQNHYFVRSHDIVKACNAYKAGAPLGSMVKGGVQDLEQARQSGSKKFKTDVASFMQTVVDEFVKLGVKELAEKPKPPVNNANTENQSKKKTRKRSRSSR.

Residues 54–214 enclose the UBC core domain; sequence NWVKKVQDEW…VFLLSLKTMV (161 aa). Cys140 (glycyl thioester intermediate) is an active-site residue. The segment at 297 to 326 is disordered; the sequence is LAEKPKPPVNNANTENQSKKKTRKRSRSSR. A compositionally biased stretch (basic residues) spans 315–326; it reads KKKTRKRSRSSR.

Belongs to the ubiquitin-conjugating enzyme family.

It carries out the reaction S-ubiquitinyl-[E1 ubiquitin-activating enzyme]-L-cysteine + [E2 ubiquitin-conjugating enzyme]-L-cysteine = [E1 ubiquitin-activating enzyme]-L-cysteine + S-ubiquitinyl-[E2 ubiquitin-conjugating enzyme]-L-cysteine.. The protein operates within protein modification; protein ubiquitination. Accepts the ubiquitin from the E1 complex and catalyzes its covalent attachment to other proteins. This Arabidopsis thaliana (Mouse-ear cress) protein is Putative ubiquitin-conjugating enzyme E2 38 (UBC38).